We begin with the raw amino-acid sequence, 204 residues long: Inactive ribonuclease-like protein 9 (204 aa).

Positions 1 to 26 are cleaved as a signal peptide; it reads MMRTPITTHPLLLLLLLQQLLQPVQF. 3 disulfides stabilise this stretch: Cys97–Cys152, Cys115–Cys167, and Cys122–Cys129. 2 N-linked (GlcNAc...) asparagine glycosylation sites follow: Asn130 and Asn142.

Belongs to the pancreatic ribonuclease family.

The protein localises to the secreted. Its function is as follows. Does not exhibit any ribonuclease activity. The chain is Inactive ribonuclease-like protein 9 (RNASE9) from Macaca nemestrina (Pig-tailed macaque).